A 309-amino-acid chain; its full sequence is Tagatose-6-phosphate kinase (309 aa).

The protein belongs to the carbohydrate kinase PfkB family. LacC subfamily.

It catalyses the reaction D-tagatofuranose 6-phosphate + ATP = D-tagatofuranose 1,6-bisphosphate + ADP + H(+). It functions in the pathway carbohydrate metabolism; D-tagatose 6-phosphate degradation; D-glyceraldehyde 3-phosphate and glycerone phosphate from D-tagatose 6-phosphate: step 1/2. The sequence is that of Tagatose-6-phosphate kinase from Streptococcus pyogenes serotype M5 (strain Manfredo).